Here is a 255-residue protein sequence, read N- to C-terminus: 5'-nucleotidase SurE (255 aa).

Asp8, Asp9, Ser40, and Asn93 together coordinate a divalent metal cation.

This sequence belongs to the SurE nucleotidase family. It depends on a divalent metal cation as a cofactor.

It is found in the cytoplasm. It catalyses the reaction a ribonucleoside 5'-phosphate + H2O = a ribonucleoside + phosphate. Its function is as follows. Nucleotidase that shows phosphatase activity on nucleoside 5'-monophosphates. The protein is 5'-nucleotidase SurE of Rhodopseudomonas palustris (strain HaA2).